The sequence spans 320 residues: Mitochondrial thiamine pyrophosphate carrier (320 aa).

3 Solcar repeats span residues 13–106 (NTKF…LTEL), 116–202 (REFS…LKHL), and 214–309 (NENL…FCNV). The chain crosses the membrane as a helical span at residues 19 to 39 (AVAGSVSGLVTRALISPFDVI). Residue Ser-51 is modified to Phosphoserine. 4 helical membrane-spanning segments follow: residues 87-107 (ILSI…TELV), 122-142 (FVCG…VDVL), 173-193 (VFYK…GLQF), and 220-240 (LLCG…LDLF). Residues 241 to 246 (KKRLQV) carry the Substrate recognition motif. The helical transmembrane segment at 293-313 (ALSTGFMFFWYEFFCNVFHCM) threads the bilayer.

The protein belongs to the mitochondrial carrier (TC 2.A.29) family.

Its subcellular location is the mitochondrion membrane. The enzyme catalyses thiamine phosphate(out) + thiamine diphosphate(in) = thiamine phosphate(in) + thiamine diphosphate(out). In terms of biological role, mitochondrial transporter mediating uptake of thiamine diphosphate into mitochondria. It is not clear if the antiporter activity is affected by the membrane potential or by the proton electrochemical gradient. This Pongo abelii (Sumatran orangutan) protein is Mitochondrial thiamine pyrophosphate carrier (SLC25A19).